The chain runs to 426 residues: Stationary phase-inducible protein CsiE (426 aa).

PRD domains are found at residues 120-225 (ARNF…DPLR) and 229-336 (QRDR…ENDL).

The polypeptide is Stationary phase-inducible protein CsiE (csiE) (Escherichia coli (strain K12)).